Here is a 176-residue protein sequence, read N- to C-terminus: ATP synthase subunit b (176 aa).

The helical transmembrane segment at 14–34 (STTLGTMIVVSGAFLILMLLL) threads the bilayer.

This sequence belongs to the ATPase B chain family. In terms of assembly, F-type ATPases have 2 components, F(1) - the catalytic core - and F(0) - the membrane proton channel. F(1) has five subunits: alpha(3), beta(3), gamma(1), delta(1), epsilon(1). F(0) has three main subunits: a(1), b(2) and c(10-14). The alpha and beta chains form an alternating ring which encloses part of the gamma chain. F(1) is attached to F(0) by a central stalk formed by the gamma and epsilon chains, while a peripheral stalk is formed by the delta and b chains.

Its subcellular location is the cell membrane. Functionally, f(1)F(0) ATP synthase produces ATP from ADP in the presence of a proton or sodium gradient. F-type ATPases consist of two structural domains, F(1) containing the extramembraneous catalytic core and F(0) containing the membrane proton channel, linked together by a central stalk and a peripheral stalk. During catalysis, ATP synthesis in the catalytic domain of F(1) is coupled via a rotary mechanism of the central stalk subunits to proton translocation. Component of the F(0) channel, it forms part of the peripheral stalk, linking F(1) to F(0). This is ATP synthase subunit b from Enterococcus faecalis (strain ATCC 700802 / V583).